Reading from the N-terminus, the 120-residue chain is MYNKENVFAKIITKNLPAEIIYEDKQILAFKDIAPIAPVHIIVIPKNEYIDYTDFISKASIDEIKHFFSKIADIANEAGLDKVGYRLITNKGEKSGQTIFHFHFHIIGGKKLIGLINNND.

Residues 7–120 enclose the HIT domain; the sequence is VFAKIITKNL…KLIGLINNND (114 aa). Positions 101–105 match the Histidine triad motif motif; that stretch reads HFHFH.

This is an uncharacterized protein from Rickettsia prowazekii (strain Madrid E).